The following is a 95-amino-acid chain: Putative regulatory protein Pmob_0099 (95 aa).

The protein belongs to the RemA family.

This chain is Putative regulatory protein Pmob_0099, found in Petrotoga mobilis (strain DSM 10674 / SJ95).